The following is a 534-amino-acid chain: Arginine--tRNA ligase (534 aa).

Positions 120–130 (ANPTGFLHLGH) match the 'HIGH' region motif.

This sequence belongs to the class-I aminoacyl-tRNA synthetase family. In terms of assembly, monomer.

It localises to the cytoplasm. It carries out the reaction tRNA(Arg) + L-arginine + ATP = L-arginyl-tRNA(Arg) + AMP + diphosphate. This Mesomycoplasma hyopneumoniae (strain J / ATCC 25934 / NCTC 10110) (Mycoplasma hyopneumoniae) protein is Arginine--tRNA ligase.